The following is a 460-amino-acid chain: Elongation factor 1-alpha (460 aa).

Residue G2 is modified to N,N,N-trimethylglycine. N6,N6-dimethyllysine; alternate is present on K3. K3 bears the N6-methyllysine; alternate mark. Positions 5-240 (KLHVNVVVIG…DAIEPPVRPS (236 aa)) constitute a tr-type G domain. The G1 stretch occupies residues 14-21 (GHVDSGKS). 14–21 (GHVDSGKS) contributes to the GTP binding site. K30 bears the N6-methyllysine mark. Residues 70 to 74 (GITID) form a G2 region. The residue at position 79 (K79) is an N6,N6,N6-trimethyllysine. A G3 region spans residues 91–94 (DAPG). Residues 91–95 (DAPGH) and 153–156 (NKMD) each bind GTP. Positions 153-156 (NKMD) are G4. The interval 192–194 (SGW) is G5. The residue at position 316 (K316) is an N6,N6-dimethyllysine; alternate. N6-methyllysine; alternate is present on K316. An N6-methyllysine modification is found at K390.

It belongs to the TRAFAC class translation factor GTPase superfamily. Classic translation factor GTPase family. EF-Tu/EF-1A subfamily.

The protein localises to the cytoplasm. In terms of biological role, this protein promotes the GTP-dependent binding of aminoacyl-tRNA to the A-site of ribosomes during protein biosynthesis. The sequence is that of Elongation factor 1-alpha (TEF1) from Schizophyllum commune (Split gill fungus).